The sequence spans 226 residues: Orotate phosphoribosyltransferase (226 aa).

Residues Lys26, 73–74 (YK), Arg100, Lys101, Lys104, His106, and 128–136 (EDVTTSGKS) each bind 5-phospho-alpha-D-ribose 1-diphosphate. Residues Thr132 and Arg161 each contribute to the orotate site.

This sequence belongs to the purine/pyrimidine phosphoribosyltransferase family. PyrE subfamily. As to quaternary structure, homodimer. The cofactor is Mg(2+).

The catalysed reaction is orotidine 5'-phosphate + diphosphate = orotate + 5-phospho-alpha-D-ribose 1-diphosphate. It participates in pyrimidine metabolism; UMP biosynthesis via de novo pathway; UMP from orotate: step 1/2. Its function is as follows. Catalyzes the transfer of a ribosyl phosphate group from 5-phosphoribose 1-diphosphate to orotate, leading to the formation of orotidine monophosphate (OMP). This is Orotate phosphoribosyltransferase from Agathobacter rectalis (strain ATCC 33656 / DSM 3377 / JCM 17463 / KCTC 5835 / VPI 0990) (Eubacterium rectale).